Here is a 348-residue protein sequence, read N- to C-terminus: Aldose 1-epimerase (348 aa).

R80 provides a ligand contact to substrate. Residue H180 is the Proton donor of the active site. A substrate-binding site is contributed by D243. E311 functions as the Proton acceptor in the catalytic mechanism.

Belongs to the aldose epimerase family.

It carries out the reaction alpha-D-glucose = beta-D-glucose. It functions in the pathway carbohydrate metabolism; hexose metabolism. Its function is as follows. Mutarotase converts alpha-aldose to the beta-anomer. It is active on D-glucose, L-arabinose, D-xylose, D-galactose, maltose and lactose. The chain is Aldose 1-epimerase (galM) from Streptococcus thermophilus.